Consider the following 409-residue polypeptide: UDP-N-acetylglucosamine--N-acetylmuramyl-(pentapeptide) pyrophosphoryl-undecaprenol N-acetylglucosamine transferase (409 aa).

Residues 11–13 (TGG), asparagine 125, arginine 169, serine 199, and glutamine 299 contribute to the UDP-N-acetyl-alpha-D-glucosamine site.

This sequence belongs to the glycosyltransferase 28 family. MurG subfamily.

Its subcellular location is the cell membrane. It catalyses the reaction di-trans,octa-cis-undecaprenyl diphospho-N-acetyl-alpha-D-muramoyl-L-alanyl-D-glutamyl-meso-2,6-diaminopimeloyl-D-alanyl-D-alanine + UDP-N-acetyl-alpha-D-glucosamine = di-trans,octa-cis-undecaprenyl diphospho-[N-acetyl-alpha-D-glucosaminyl-(1-&gt;4)]-N-acetyl-alpha-D-muramoyl-L-alanyl-D-glutamyl-meso-2,6-diaminopimeloyl-D-alanyl-D-alanine + UDP + H(+). Its pathway is cell wall biogenesis; peptidoglycan biosynthesis. Cell wall formation. Catalyzes the transfer of a GlcNAc subunit on undecaprenyl-pyrophosphoryl-MurNAc-pentapeptide (lipid intermediate I) to form undecaprenyl-pyrophosphoryl-MurNAc-(pentapeptide)GlcNAc (lipid intermediate II). The chain is UDP-N-acetylglucosamine--N-acetylmuramyl-(pentapeptide) pyrophosphoryl-undecaprenol N-acetylglucosamine transferase from Clostridioides difficile (strain 630) (Peptoclostridium difficile).